Reading from the N-terminus, the 77-residue chain is Apelin (77 aa).

Positions 1–22 (MNLRLCVQALLLLWLSLTAVCG) are cleaved as a signal peptide. A propeptide spanning residues 23-41 (VPLMLPPDGTGLEEGSMRY) is cleaved from the precursor. The disordered stretch occupies residues 46–77 (RTSRTGPGAWQGGRRKFRRQRPRLSHKGPMPF). Residues 58-71 (GRRKFRRQRPRLSH) show a composition bias toward basic residues.

It belongs to the apelin family. In terms of processing, several active peptides may be produced by proteolytic processing of the peptide precursor. In terms of tissue distribution, expressed in extraembryonic visceral endoderm and in the primitive streak at 6.5 and 7.5 dpc. Expressed in the anterior visceral yolk sac at 8.25 dpc. Expressed weakly in the embryonic heart at 11.5 dpc. Expressed in the adult heart. Expressed in endothelial cells and cardiomyocytes and weakly expressed in fibroblasts.

It is found in the secreted. The protein localises to the extracellular space. In terms of biological role, peptide hormone that functions as endogenous ligand for the G-protein-coupled apelin receptor (APLNR/APJ). Functions as a balanced agonist activating both G(i) protein pathway and beta-arrestin pathway of APLNR. Downstream G proteins activation, apelin can inhibit cAMP production and activate key intracellular effectors such as ERKs. On the other hand, APLNR activation induces beta-arrestin recruitment to the membrane leading to desensitization and internalization of the receptor. Apelin also blunts mechanical stretch-induced hypertrophic induction from APLNR. Apelin-36 dissociates more hardly than (pyroglu)apelin-13 from APLNR. Involved in the regulation of cardiac precursor cell movements during gastrulation and heart morphogenesis. Has an inhibitory effect on cytokine production in response to T-cell receptor/CD3 cross-linking; the oral intake of apelin in the colostrum and the milk might therefore modulate immune responses in neonates. Plays a role in early coronary blood vessels formation. Mediates myocardial contractility in an ERK1/2-dependent manner. May also have a role in the central control of body fluid homeostasis by influencing vasopressin release and drinking behavior. The polypeptide is Apelin (Mus musculus (Mouse)).